Reading from the N-terminus, the 689-residue chain is Glycine--tRNA ligase beta subunit (689 aa).

This sequence belongs to the class-II aminoacyl-tRNA synthetase family. As to quaternary structure, tetramer of two alpha and two beta subunits.

The protein localises to the cytoplasm. It carries out the reaction tRNA(Gly) + glycine + ATP = glycyl-tRNA(Gly) + AMP + diphosphate. The chain is Glycine--tRNA ligase beta subunit from Shigella dysenteriae serotype 1 (strain Sd197).